The sequence spans 373 residues: Probable dual-specificity RNA methyltransferase RlmN (373 aa).

Glu-111 acts as the Proton acceptor in catalysis. One can recognise a Radical SAM core domain in the interval 117-356 (GPGRLTACLS…LRKSYGTSIH (240 aa)). Cys-124 and Cys-359 are disulfide-bonded. [4Fe-4S] cluster is bound by residues Cys-131, Cys-135, and Cys-138. S-adenosyl-L-methionine contacts are provided by residues 183–184 (GE), Ser-216, 239–241 (SLH), and Asn-316. The active-site S-methylcysteine intermediate is Cys-359.

It belongs to the radical SAM superfamily. RlmN family. It depends on [4Fe-4S] cluster as a cofactor.

Its subcellular location is the cytoplasm. It catalyses the reaction adenosine(2503) in 23S rRNA + 2 reduced [2Fe-2S]-[ferredoxin] + 2 S-adenosyl-L-methionine = 2-methyladenosine(2503) in 23S rRNA + 5'-deoxyadenosine + L-methionine + 2 oxidized [2Fe-2S]-[ferredoxin] + S-adenosyl-L-homocysteine. The catalysed reaction is adenosine(37) in tRNA + 2 reduced [2Fe-2S]-[ferredoxin] + 2 S-adenosyl-L-methionine = 2-methyladenosine(37) in tRNA + 5'-deoxyadenosine + L-methionine + 2 oxidized [2Fe-2S]-[ferredoxin] + S-adenosyl-L-homocysteine. Specifically methylates position 2 of adenine 2503 in 23S rRNA and position 2 of adenine 37 in tRNAs. This chain is Probable dual-specificity RNA methyltransferase RlmN, found in Chlorobium phaeovibrioides (strain DSM 265 / 1930) (Prosthecochloris vibrioformis (strain DSM 265)).